Reading from the N-terminus, the 275-residue chain is MALQQDIIEALGVKPTIDADEEIRISVDFLKSYLKRYPFLKSLVLGISGGQDSTLTGKLCQMAMTELRAESGDSDYQFIAVRLPHGVQADEQDCQDAITFIQPDRVLTVNIKAAVQASEQALREAGITLSDFIRGNEKARERMKVQYSIAGMNAGVVVGTDHAAEAVTGFFTKYGDGGTDINPIFRLNKGQGKRLLNALGCPEHLWLKHPTADLEDDRPGLQDEVALGVTYEMIDRYLQGESIDPAAAKIIEGWYVKTEHKRRTPITVFDDFWKK.

Residue 46 to 53 (GISGGQDS) coordinates ATP. D52 is a Mg(2+) binding site. A deamido-NAD(+)-binding site is contributed by R140. T160 lines the ATP pocket. E165 serves as a coordination point for Mg(2+). The deamido-NAD(+) site is built by K173 and D180. 2 residues coordinate ATP: K189 and T211. 260 to 261 (HK) is a deamido-NAD(+) binding site.

Belongs to the NAD synthetase family. In terms of assembly, homodimer.

The catalysed reaction is deamido-NAD(+) + NH4(+) + ATP = AMP + diphosphate + NAD(+) + H(+). It functions in the pathway cofactor biosynthesis; NAD(+) biosynthesis; NAD(+) from deamido-NAD(+) (ammonia route): step 1/1. Functionally, catalyzes the ATP-dependent amidation of deamido-NAD to form NAD. Uses ammonia as a nitrogen source. The chain is NH(3)-dependent NAD(+) synthetase from Erwinia tasmaniensis (strain DSM 17950 / CFBP 7177 / CIP 109463 / NCPPB 4357 / Et1/99).